We begin with the raw amino-acid sequence, 68 residues long: Neuronal regeneration-related protein (68 aa).

Positions 21 to 54 are disordered; the sequence is MEGRLPKGRLPVPKEVNRKKNDETNAASLTPLGS. Polar residues predominate over residues 44–54; sequence TNAASLTPLGS.

In terms of assembly, interacts with the latency-associated peptides (LAP) of TGFB1 and TGFB2; the interaction results in a decrease in TGFB autoinduction. Interacts with FLNA. In terms of processing, phosphorylated on Ser-59. Phosphorylation decreases stability and activity.

Its subcellular location is the cytoplasm. May have roles in neural function and cellular differentiation. Ectopic expression promotes axonal regeneration, induces differentiation of fibroblast into myofibroblast, induces myofibroblast ameboid migration, augments motility of gliomas, and increases retinoic-acid regulation of lipid-droplet biogenesis. Down-regulates the expression of TGFB1 and TGFB2 but not of TGFB3. May play a role in the regulation of alveolar generation. The polypeptide is Neuronal regeneration-related protein (NREP) (Pongo abelii (Sumatran orangutan)).